A 949-amino-acid polypeptide reads, in one-letter code: RNA polymerase-associated protein RapA (949 aa).

The Helicase ATP-binding domain maps to 164 to 332 (EVADRIAPRV…FARLRLLDPN (169 aa)). 177–184 (DEVGLGKT) is an ATP binding site. A DEAH box motif is present at residues 278 to 281 (DEAH). The Helicase C-terminal domain occupies 474–628 (RVEWLIDTLK…TCPTGNALQH (155 aa)).

The protein belongs to the SNF2/RAD54 helicase family. RapA subfamily. As to quaternary structure, interacts with the RNAP. Has a higher affinity for the core RNAP than for the holoenzyme. Its ATPase activity is stimulated by binding to RNAP.

Its function is as follows. Transcription regulator that activates transcription by stimulating RNA polymerase (RNAP) recycling in case of stress conditions such as supercoiled DNA or high salt concentrations. Probably acts by releasing the RNAP, when it is trapped or immobilized on tightly supercoiled DNA. Does not activate transcription on linear DNA. Probably not involved in DNA repair. The chain is RNA polymerase-associated protein RapA from Stutzerimonas stutzeri (strain A1501) (Pseudomonas stutzeri).